The sequence spans 375 residues: MAQLCVALVAGEASGDILGSGLMRALKARHPDVRFIGVGGPLMEAEGLQSYFPMERLAVMGLVEVLGRLRELLKRRKLLIQTLIEEKPDVFIGIDAPDFTLNIELKLRQAGIKTVHYVSPSVWAWRQKRVLKIREGCDLMLTLLPFEARFYEEQGVPVRFVGHPLADTIPLEADRPAARAALGLGEGPVVALMPGSRGGEVGRLGALFLDAAERLSQQVPGVRFVLPCANATRRAQIEQMLEGRQLPLTLLDGQSHQALAACDAVLIASGTATLEALLYKRPMVVAYRLAPLTFWILKRLVKSPYVSLPNLLAQRELVPELLQDDATSEALANTLAPLVRDGSQQTERFDEIHRTLRRDASNQAAEAVLALLKDR.

It belongs to the LpxB family.

It carries out the reaction a lipid X + a UDP-2-N,3-O-bis[(3R)-3-hydroxyacyl]-alpha-D-glucosamine = a lipid A disaccharide + UDP + H(+). It functions in the pathway bacterial outer membrane biogenesis; LPS lipid A biosynthesis. Condensation of UDP-2,3-diacylglucosamine and 2,3-diacylglucosamine-1-phosphate to form lipid A disaccharide, a precursor of lipid A, a phosphorylated glycolipid that anchors the lipopolysaccharide to the outer membrane of the cell. In Pseudomonas putida (strain ATCC 47054 / DSM 6125 / CFBP 8728 / NCIMB 11950 / KT2440), this protein is Lipid-A-disaccharide synthase.